Consider the following 137-residue polypeptide: Nucleoside diphosphate kinase (137 aa).

Lys9, Phe57, Arg85, Thr91, Arg102, and Asn112 together coordinate ATP. The Pros-phosphohistidine intermediate role is filled by His115.

It belongs to the NDK family. In terms of assembly, homotetramer. Requires Mg(2+) as cofactor.

The protein resides in the cytoplasm. It catalyses the reaction a 2'-deoxyribonucleoside 5'-diphosphate + ATP = a 2'-deoxyribonucleoside 5'-triphosphate + ADP. It carries out the reaction a ribonucleoside 5'-diphosphate + ATP = a ribonucleoside 5'-triphosphate + ADP. In terms of biological role, major role in the synthesis of nucleoside triphosphates other than ATP. The ATP gamma phosphate is transferred to the NDP beta phosphate via a ping-pong mechanism, using a phosphorylated active-site intermediate. The polypeptide is Nucleoside diphosphate kinase (Geotalea daltonii (strain DSM 22248 / JCM 15807 / FRC-32) (Geobacter daltonii)).